Consider the following 490-residue polypeptide: Transcription factor lin-26 (490 aa).

Disordered stretches follow at residues 96–176, 236–262, and 302–326; these read KYKD…PLHQ, TPEY…EPDS, and ASKP…KKHR. Residues 101–110 are PEST; sequence SSSPESPSTT. Residues 101–120 are compositionally biased toward low complexity; the sequence is SSSPESPSTTASTAAQHTPP. Polar residues-rich tracts occupy residues 123–132 and 151–176; these read AVSTPTSINT and NLST…PLHQ. Over residues 236-260 the composition is skewed to basic and acidic residues; sequence TPEYDDNHHSETISKASSEDLKTEP. The segment at 353-381 adopts a C2H2-type; degenerate zinc-finger fold; it reads YKCALCGKPTTLNSTGSRWNLLRHVIMIH.

In terms of tissue distribution, expressed in somatic gonads and germline precursors until the 50-cell stage. After the 100-cell stage, expression is seen in differentiating hypodermal and support cells (at protein level).

The protein localises to the nucleus. In terms of biological role, probable transcription factor. Required to specify the fates of hypodermal and neuron-associated support cells. Functions during vulval development, playing a role in vulval precursor cell fate specification. Positively modulates expression of homeobox protein lin-39, perhaps by binding to regulatory regions of the lin-39 gene, acting in the vulval lineage. The sequence is that of Transcription factor lin-26 from Caenorhabditis elegans.